Consider the following 734-residue polypeptide: Photosystem I P700 chlorophyll a apoprotein A2 (734 aa).

The next 8 membrane-spanning stretches (helical) occupy residues 46–69 (IFAS…FHVA), 135–158 (LYTG…LHLQ), 175–199 (LNHH…HVAI), 273–291 (IAHH…GHMY), 330–353 (IHFQ…QHMY), 369–395 (AALY…IFFI), 417–439 (AIIS…LYVH), and 517–535 (FLVH…LILV). [4Fe-4S] cluster is bound by residues Cys-559 and Cys-568. Transmembrane regions (helical) follow at residues 575-596 (AFYL…YWHW) and 643-665 (LSVW…MFLI). The chlorophyll a site is built by His-654, Met-662, and Tyr-670. Trp-671 lines the phylloquinone pocket. The helical transmembrane segment at 707–727 (LVGLAHFSVGYIFTYAAFLIA) threads the bilayer.

It belongs to the PsaA/PsaB family. In terms of assembly, the PsaA/B heterodimer binds the P700 chlorophyll special pair and subsequent electron acceptors. PSI consists of a core antenna complex that captures photons, and an electron transfer chain that converts photonic excitation into a charge separation. The eukaryotic PSI reaction center is composed of at least 11 subunits. Requires P700 is a chlorophyll a/chlorophyll a' dimer, A0 is one or more chlorophyll a, A1 is one or both phylloquinones and FX is a shared 4Fe-4S iron-sulfur center. as cofactor.

The protein localises to the plastid. It is found in the chloroplast thylakoid membrane. It carries out the reaction reduced [plastocyanin] + hnu + oxidized [2Fe-2S]-[ferredoxin] = oxidized [plastocyanin] + reduced [2Fe-2S]-[ferredoxin]. Its function is as follows. PsaA and PsaB bind P700, the primary electron donor of photosystem I (PSI), as well as the electron acceptors A0, A1 and FX. PSI is a plastocyanin-ferredoxin oxidoreductase, converting photonic excitation into a charge separation, which transfers an electron from the donor P700 chlorophyll pair to the spectroscopically characterized acceptors A0, A1, FX, FA and FB in turn. Oxidized P700 is reduced on the lumenal side of the thylakoid membrane by plastocyanin. The protein is Photosystem I P700 chlorophyll a apoprotein A2 of Oryza sativa (Rice).